The primary structure comprises 145 residues: Superoxide dismutase [Mn/Fe] (145 aa).

Positions 10 and 64 each coordinate Fe(3+). His-10 and His-64 together coordinate Mn(2+).

It belongs to the iron/manganese superoxide dismutase family. It depends on Mn(2+) as a cofactor. Fe(3+) serves as cofactor.

The catalysed reaction is 2 superoxide + 2 H(+) = H2O2 + O2. Its function is as follows. Destroys superoxide anion radicals which are normally produced within the cells and which are toxic to biological systems. Catalyzes the dismutation of superoxide anion radicals into O2 and H2O2 by successive reduction and oxidation of the transition metal ion at the active site. The polypeptide is Superoxide dismutase [Mn/Fe] (sodA) (Streptococcus porcinus).